Reading from the N-terminus, the 292-residue chain is Sulfofructosephosphate aldolase (292 aa).

Residue Lys193 is the Schiff-base intermediate with substrate of the active site.

Belongs to the aldolase LacD family. As to quaternary structure, homotetramer.

The catalysed reaction is 6-deoxy-6-sulfo-D-fructose 1-phosphate = (2S)-3-sulfolactaldehyde + dihydroxyacetone phosphate. Functionally, cleaves 6-deoxy-6-sulfo-D-fructose 1-phosphate (SFP) to form dihydroxyacetone phosphate (DHAP) and 3-sulfolactaldehyde (SLA). The sequence is that of Sulfofructosephosphate aldolase (yihT) from Escherichia coli (strain K12).